Reading from the N-terminus, the 515-residue chain is Fatty acyl-CoA reductase 1 (515 aa).

Topologically, residues Met-1–Asn-465 are cytoplasmic. The helical transmembrane segment at Ile-466–Ile-483 threads the bilayer. Topologically, residues Ala-484–Tyr-515 are peroxisomal.

The protein belongs to the fatty acyl-CoA reductase family.

The protein resides in the peroxisome membrane. It catalyses the reaction a long-chain fatty acyl-CoA + 2 NADPH + 2 H(+) = a long-chain primary fatty alcohol + 2 NADP(+) + CoA. The enzyme catalyses hexadecanoyl-CoA + 2 NADPH + 2 H(+) = hexadecan-1-ol + 2 NADP(+) + CoA. The catalysed reaction is octadecanoyl-CoA + 2 NADPH + 2 H(+) = octadecan-1-ol + 2 NADP(+) + CoA. It carries out the reaction (9Z)-octadecenoyl-CoA + 2 NADPH + 2 H(+) = (9Z)-octadecen-1-ol + 2 NADP(+) + CoA. It catalyses the reaction (9Z,12Z)-octadecadienoyl-CoA + 2 NADPH + 2 H(+) = (9Z,12Z)-octadecadien-1-ol + 2 NADP(+) + CoA. The enzyme catalyses eicosanoyl-CoA + 2 NADPH + 2 H(+) = eicosan-1-ol + 2 NADP(+) + CoA. The catalysed reaction is 16-methylheptadecanoyl-CoA + 2 NADPH + 2 H(+) = 16-methylheptadecan-1-ol + 2 NADP(+) + CoA. It carries out the reaction 18-methylnonadecanoyl-CoA + 2 NADPH + 2 H(+) = 18-methylnonadecan-1-ol + 2 NADP(+) + CoA. Catalyzes the reduction of saturated and unsaturated C16 or C18 fatty acyl-CoA to fatty alcohols. It plays an essential role in the production of ether lipids/plasmalogens which synthesis requires fatty alcohols. In parallel, it is also required for wax monoesters production since fatty alcohols also constitute a substrate for their synthesis. The sequence is that of Fatty acyl-CoA reductase 1 from Gallus gallus (Chicken).